A 431-amino-acid polypeptide reads, in one-letter code: REST corepressor 1 (431 aa).

The span at 1 to 10 (MIEKGAEISG) shows a compositional bias: basic and acidic residues. Residues 1–53 (MIEKGAEISGKRRGRNNAANSKSLGTNVNGSNSWEEGSSSSSSDDEPGGGGMR) form a disordered region. Residues 17–28 (NAANSKSLGTNV) are compositionally biased toward polar residues. A compositionally biased stretch (low complexity) spans 29–42 (NGSNSWEEGSSSSS). Residues 50–135 (GGMRVGLQYQ…KSLADLLNFT (86 aa)) enclose the ELM2 domain. One can recognise an SANT 1 domain in the interval 136-187 (PFPDEWTVEDRVLFEQAFSFHGKTFHRIQQMLPDKSIASLVKFYYSWKKTRS). The disordered stretch occupies residues 190-262 (SVMDRHARKQ…NRAKRKPPNG (73 aa)). Residues 224–242 (EQPKEAKKEVPKNDTVPHI) show a composition bias toward basic and acidic residues. A coiled-coil region spans residues 267–314 (QEDVEAVSANANAATTVLRQLDMELVSIKRQIQNIKQTNSAFKEKLQG). An SANT 2 domain is found at 327-378 (KFNARWTTEEQLLAVQAIRMYGRDFQAISDVIGNKSVVQVKNFFVNYRRRFN).

This sequence belongs to the CoREST family. As to quaternary structure, component of a BHC histone deacetylase complex that contains KDM1A. As to expression, expressed in territories in which neurogenesis takes place.

The protein resides in the nucleus. In terms of biological role, essential component of the BHC complex, a corepressor complex that represses transcription of neuron-specific genes in non-neuronal cells. The BHC complex is recruited at RE1/NRSE sites by REST and acts by deacetylating and demethylating specific sites on histones, thereby acting as a chromatin modifier. In the BHC complex, it serves as a molecular beacon for the recruitment of molecular machinery that imposes silencing across a chromosomal interval. Plays a central role in demethylation of Lys-4 of histone H3 by promoting demethylase activity of KDM1A on core histones and nucleosomal substrates. This chain is REST corepressor 1 (rcor1), found in Xenopus laevis (African clawed frog).